We begin with the raw amino-acid sequence, 350 residues long: Small ribosomal subunit biogenesis GTPase RsgA (350 aa).

Polar residues predominate over residues 1 to 17; it reads MSKNKLSKGQQRRVNAN. Residues 1–33 form a disordered region; sequence MSKNKLSKGQQRRVNANHQRRLKTSKEKPDYDD. The CP-type G domain maps to 104 to 273; sequence TSVLTRPDFY…VIDSPGVREF (170 aa). Residues 160-163 and 214-222 each bind GTP; these read NKID and GQSGVGKSS. Zn(2+) is bound by residues Cys297, Cys302, His304, and Cys310.

It belongs to the TRAFAC class YlqF/YawG GTPase family. RsgA subfamily. Monomer. Associates with 30S ribosomal subunit, binds 16S rRNA. The cofactor is Zn(2+).

It is found in the cytoplasm. Its function is as follows. One of several proteins that assist in the late maturation steps of the functional core of the 30S ribosomal subunit. Helps release RbfA from mature subunits. May play a role in the assembly of ribosomal proteins into the subunit. Circularly permuted GTPase that catalyzes slow GTP hydrolysis, GTPase activity is stimulated by the 30S ribosomal subunit. In Shigella flexneri, this protein is Small ribosomal subunit biogenesis GTPase RsgA.